Consider the following 94-residue polypeptide: Large ribosomal subunit protein bL27 (94 aa).

A propeptide spanning residues 1–9 is cleaved from the precursor; the sequence is MLKLNLQFF. The interval 13 to 32 is disordered; the sequence is KGLGSTKNGRDSESKRLGAK. The segment covering 20–32 has biased composition (basic and acidic residues); the sequence is NGRDSESKRLGAK.

It belongs to the bacterial ribosomal protein bL27 family. Post-translationally, the N-terminus is cleaved by ribosomal processing cysteine protease Prp.

The sequence is that of Large ribosomal subunit protein bL27 from Staphylococcus saprophyticus subsp. saprophyticus (strain ATCC 15305 / DSM 20229 / NCIMB 8711 / NCTC 7292 / S-41).